The sequence spans 98 residues: NADH-ubiquinone oxidoreductase chain 4L (98 aa).

3 helical membrane passes run 1–21 (MSLV…GLLM), 25–45 (HLMS…VMAT), and 59–81 (MPII…LVMV).

The protein belongs to the complex I subunit 4L family. Core subunit of respiratory chain NADH dehydrogenase (Complex I) which is composed of 45 different subunits.

Its subcellular location is the mitochondrion inner membrane. It catalyses the reaction a ubiquinone + NADH + 5 H(+)(in) = a ubiquinol + NAD(+) + 4 H(+)(out). In terms of biological role, core subunit of the mitochondrial membrane respiratory chain NADH dehydrogenase (Complex I) which catalyzes electron transfer from NADH through the respiratory chain, using ubiquinone as an electron acceptor. Part of the enzyme membrane arm which is embedded in the lipid bilayer and involved in proton translocation. This is NADH-ubiquinone oxidoreductase chain 4L (MT-ND4L) from Equus caballus (Horse).